Here is a 412-residue protein sequence, read N- to C-terminus: Citrate synthase (412 aa).

Catalysis depends on residues His305 and Asp364.

The protein belongs to the citrate synthase family.

It carries out the reaction oxaloacetate + acetyl-CoA + H2O = citrate + CoA + H(+). The protein operates within carbohydrate metabolism; tricarboxylic acid cycle; isocitrate from oxaloacetate: step 1/2. The polypeptide is Citrate synthase (gltA) (Rickettsia bellii).